The following is a 547-amino-acid chain: Probable aquaporin-5 (547 aa).

The span at 1–13 shows a compositional bias: polar residues; that stretch reads MSSSILNNRSARS. The interval 1–208 is disordered; sequence MSSSILNNRS…DPRIPPNDRR (208 aa). Residues 1 to 269 lie on the Cytoplasmic side of the membrane; it reads MSSSILNNRS…QWMNSNFKNH (269 aa). A compositionally biased stretch (low complexity) spans 15-32; it reads PAGANPAFNPPAEASSSS. 2 stretches are compositionally biased toward basic and acidic residues: residues 152-169 and 198-208; these read EYER…DRYT and DDPRIPPNDRR. Residues 270-290 form a helical membrane-spanning segment; the sequence is FVAGVGEFIGTTMFLFFAFAG. The Extracellular segment spans residues 291-316; sequence TEVANIQADTTNRTTTGESTGSLNVS. Residues N302 and N314 are each glycosylated (N-linked (GlcNAc...) asparagine). Residues 317 to 337 form a helical membrane-spanning segment; the sequence is KLLYISIIFGFSLMVNVWVFF. The Cytoplasmic segment spans residues 338–363; it reads RISGGLFNPAVTMAMLMVKAISVTRA. Residues 345 to 347 carry the NPA 1 motif; the sequence is NPA. The chain crosses the membrane as a helical span at residues 364-384; that stretch reads IVLFLAQILGSMLASVVVRYL. The Extracellular portion of the chain corresponds to 385-400; sequence FPETFNVRTTLGGGAS. A helical transmembrane segment spans residues 401–421; the sequence is LVQGVFIEALLTAELVFTIFM. Over 422–428 the chain is Cytoplasmic; it reads LAKEKHR. A helical transmembrane segment spans residues 429–449; the sequence is ATFIAPVGIGLALFIAEMVGV. Over 450–475 the chain is Extracellular; sequence QFTGGSLNPARSFGPCVITGSFDTEH. The short motif at 457–459 is the NPA 2 element; sequence NPA. The chain crosses the membrane as a helical span at residues 476 to 496; it reads WIYWVGPAIGSLIAVCFYWFI. Residues 497–547 lie on the Cytoplasmic side of the membrane; that stretch reads KTLEYEMANPGADGDDLNDPTKNPEKRAEIQASKPVPTAAFGSGKTASILS. Positions 510-547 are disordered; the sequence is GDDLNDPTKNPEKRAEIQASKPVPTAAFGSGKTASILS.

The protein belongs to the MIP/aquaporin (TC 1.A.8) family.

It is found in the membrane. The catalysed reaction is H2O(in) = H2O(out). Functionally, probable water channel that may have redundant functions with FgAQP3. The protein is Probable aquaporin-5 of Gibberella zeae (strain ATCC MYA-4620 / CBS 123657 / FGSC 9075 / NRRL 31084 / PH-1) (Wheat head blight fungus).